The sequence spans 376 residues: Glucose-1-phosphate adenylyltransferase (376 aa).

Alpha-D-glucose 1-phosphate contacts are provided by residues Tyr101, Gly166, 181–182, and Ser192; that span reads EK.

This sequence belongs to the bacterial/plant glucose-1-phosphate adenylyltransferase family. As to quaternary structure, homotetramer.

The enzyme catalyses alpha-D-glucose 1-phosphate + ATP + H(+) = ADP-alpha-D-glucose + diphosphate. It functions in the pathway glycan biosynthesis; glycogen biosynthesis. In terms of biological role, involved in the biosynthesis of ADP-glucose, a building block required for the elongation reactions to produce glycogen. Catalyzes the reaction between ATP and alpha-D-glucose 1-phosphate (G1P) to produce pyrophosphate and ADP-Glc. The protein is Glucose-1-phosphate adenylyltransferase of Bacillus cereus (strain ZK / E33L).